A 132-amino-acid chain; its full sequence is Galectin-2 (132 aa).

The region spanning 4–131 (ELEVKNMDMK…GFNMSSFKLK (128 aa)) is the Galectin domain. An a beta-D-galactoside-binding site is contributed by 65 to 71 (WGQEQRE).

As to quaternary structure, homodimer.

This protein binds beta-galactoside. Its physiological function is not yet known. The polypeptide is Galectin-2 (LGALS2) (Homo sapiens (Human)).